Reading from the N-terminus, the 172-residue chain is Translation initiation factor IF-3 (172 aa).

It belongs to the IF-3 family. In terms of assembly, monomer.

The protein resides in the cytoplasm. IF-3 binds to the 30S ribosomal subunit and shifts the equilibrium between 70S ribosomes and their 50S and 30S subunits in favor of the free subunits, thus enhancing the availability of 30S subunits on which protein synthesis initiation begins. The polypeptide is Translation initiation factor IF-3 (Geobacter metallireducens (strain ATCC 53774 / DSM 7210 / GS-15)).